The sequence spans 459 residues: Ribulose bisphosphate carboxylase (459 aa).

Substrate is bound at residue Asn111. The Proton acceptor role is filled by Lys166. Lys168 is a substrate binding site. Positions 191, 193, and 194 each coordinate Mg(2+). Position 191 is an N6-carboxylysine (Lys191). His287 serves as the catalytic Proton acceptor. The substrate site is built by Arg288, His321, and Ser368.

Belongs to the RuBisCO large chain family. Type II subfamily. In terms of assembly, homodimer. Requires Mg(2+) as cofactor.

It carries out the reaction 2 (2R)-3-phosphoglycerate + 2 H(+) = D-ribulose 1,5-bisphosphate + CO2 + H2O. It catalyses the reaction D-ribulose 1,5-bisphosphate + O2 = 2-phosphoglycolate + (2R)-3-phosphoglycerate + 2 H(+). RuBisCO catalyzes two reactions: the carboxylation of D-ribulose 1,5-bisphosphate, the primary event in carbon dioxide fixation, as well as the oxidative fragmentation of the pentose substrate. Both reactions occur simultaneously and in competition at the same active site. This is Ribulose bisphosphate carboxylase from Paramagnetospirillum magnetotacticum (Aquaspirillum magnetotacticum).